Here is a 495-residue protein sequence, read N- to C-terminus: MFAKIALVGRPNVGKSTLFNRLIRSNRAITHDMPGVTRDRMEGIVRGRNKRPFGIIDTGGITLDGHAAVAEGPAGIRGFEAEILRQAEEAIAECVAVCLVVDGREGLLPFDEHLASYLRRTGKPVLVVVNKVDGIEKEDVLTAEFHILGFPVLAVSAEHGHNLRWLESEMRDLLPEEDEDGIDDDAADATAVASADADVDADVETEGGTSASETEEGITEETVEDEPEAPLRLCMLGRPNAGKSSLVNALTGTNRMIVSDVAGTTRDSVDVAFEKDGLSYTFVDTAGVRRRSRITDTVERYSVNSSLKSTTKAHVTLLVLDAVEGITSQDKRLIELLDERKTPFMVLVNKMDLVPAKAREDGKRNFRDLLNFCQHVPLLFVSAKTGYELRSIVPLAARIRRECSVRIPTGQLNRAMEEVITRHQPPVVRRVRPKFYYMTQAESQPPTFVLFVNDADRIQAPYAKYIEKSLRRLFGIEHAPMRVHFRSSHKKNSEK.

The EngA-type G 1 domain maps to 3-178; that stretch reads AKIALVGRPN…EMRDLLPEED (176 aa). Residues 9-16, 57-61, and 130-133 contribute to the GTP site; these read GRPNVGKS, DTGGI, and NKVD. The tract at residues 190–227 is disordered; that stretch reads TAVASADADVDADVETEGGTSASETEEGITEETVEDEP. Over residues 213–227 the composition is skewed to acidic residues; the sequence is ETEEGITEETVEDEP. One can recognise an EngA-type G 2 domain in the interval 231–404; that stretch reads LRLCMLGRPN…LAARIRRECS (174 aa). Residues 237–244, 284–288, and 349–352 each bind GTP; these read GRPNAGKS, DTAGV, and NKMD. A KH-like domain is found at 405–489; it reads VRIPTGQLNR…PMRVHFRSSH (85 aa).

It belongs to the TRAFAC class TrmE-Era-EngA-EngB-Septin-like GTPase superfamily. EngA (Der) GTPase family. As to quaternary structure, associates with the 50S ribosomal subunit.

Functionally, GTPase that plays an essential role in the late steps of ribosome biogenesis. This chain is GTPase Der, found in Nitratidesulfovibrio vulgaris (strain DP4) (Desulfovibrio vulgaris).